The following is a 269-amino-acid chain: Eukaryotic translation initiation factor 3 subunit G-1 (269 aa).

In terms of domain architecture, RRM spans alanine 188 to proline 266.

The protein belongs to the eIF-3 subunit G family. As to quaternary structure, component of the eukaryotic translation initiation factor 3 (eIF-3) complex. The eIF-3 complex interacts with pix.

It is found in the cytoplasm. Its function is as follows. RNA-binding component of the eukaryotic translation initiation factor 3 (eIF-3) complex, which is involved in protein synthesis of a specialized repertoire of mRNAs and, together with other initiation factors, stimulates binding of mRNA and methionyl-tRNAi to the 40S ribosome. The eIF-3 complex specifically targets and initiates translation of a subset of mRNAs involved in cell proliferation. This subunit can bind 18S rRNA. This Drosophila sechellia (Fruit fly) protein is Eukaryotic translation initiation factor 3 subunit G-1.